Here is a 1005-residue protein sequence, read N- to C-terminus: Translocated actin-recruiting phosphoprotein (1005 aa).

The span at 1-10 (MTNSISGYQP) shows a compositional bias: polar residues. 6 disordered regions span residues 1 to 36 (MTNS…SVST), 73 to 155 (APNV…SNYD), 487 to 521 (INWG…SPTP), 542 to 626 (DTNV…DGPA), 671 to 749 (GSAQ…GPSG), and 792 to 847 (TGTS…TSLM). Composition is skewed to low complexity over residues 11 to 36 (TVTT…SVST) and 73 to 121 (APNV…SSDH). Residues 130 to 154 (GSNSGDISNNYDDVGSNNGDISSNY) show a composition bias toward polar residues. Composition is skewed to low complexity over residues 542–578 (DTNV…TDDI), 593–612 (GDIS…VSSS), 720–736 (SSSG…SSES), and 831–846 (STTT…TTSL).

It belongs to the chlamydial CPn_0572/CT_456/TC_0741 family. Post-translationally, phosphorylated on a tyrosine on attachment to the host cell. Tyrosine phosphorylation is temporally and spatially associated with recruitment of actin to the site of chlamydial entry. Phosphorylated Tarp seems to remain cytoplasmically exposed on the inclusion membrane at one side of internalized elementary bodies for several hours after entry.

Its subcellular location is the secreted. Appears to initiate or participate in signaling events that regulate the actin recruitment, which ultimately leads to internalization. This Chlamydia trachomatis serovar D (strain ATCC VR-885 / DSM 19411 / UW-3/Cx) protein is Translocated actin-recruiting phosphoprotein (tarP).